Reading from the N-terminus, the 444-residue chain is Sperm-associated antigen 4 protein (444 aa).

Residues 1–109 form a disordered region; sequence MRRNPRPGSA…GGASEPSGSP (109 aa). The span at 19–36 shows a compositional bias: low complexity; sequence NFYSENSNSSHSATSGDS. The next 2 membrane-spanning stretches (helical) occupy residues 137 to 159 and 166 to 188; these read FLSLFFQVLSVFLSLVADGLVCV and IRFLFTAVSLLSIFLAALWWGLL. A coiled-coil region spans residues 204–241; that stretch reads LSQYHHRVHSQGQQLQQLQAELSKLHKEVTSVRAAHSE. In terms of domain architecture, SUN spans 267-428; that stretch reads GASIDLEKTS…YRVRAHGVRI (162 aa).

In terms of assembly, self-associates. Interacts with ODF1. May associate with microtubules. Interacts with SUN3 and SYNE1; suggesting the formation of a LINC complexs; a SUN domain-based heterotrimer of SPAG4 and SUN3 may associate with SYNE1. Interacts with SEPT12 and LMNB1; during spermatogenesis. As to expression, testis specific. Exclusively expressed in spermatids.

Its subcellular location is the membrane. It localises to the cytoplasm. The protein resides in the cytoskeleton. The protein localises to the flagellum axoneme. It is found in the nucleus envelope. Its subcellular location is the nucleus inner membrane. Functionally, involved in spermatogenesis. Required for sperm head formation but not required to establish and maintain general polarity of the sperm head. Required for anchoring and organization of the manchette. Required for targeting of SUN3 and probably SYNE1 through a probable SUN1:SYNE3 LINC complex to the nuclear envelope and involved in accurate posterior sperm head localization of the complex. May anchor SUN3 the nuclear envelope. Involved in maintenance of the nuclear envelope integrity. May assist the organization and assembly of outer dense fibers (ODFs), a specific structure of the sperm tail. This is Sperm-associated antigen 4 protein (Spag4) from Rattus norvegicus (Rat).